The chain runs to 155 residues: Ribosome maturation factor RimP (155 aa).

The protein belongs to the RimP family.

The protein resides in the cytoplasm. Required for maturation of 30S ribosomal subunits. This is Ribosome maturation factor RimP from Desulforapulum autotrophicum (strain ATCC 43914 / DSM 3382 / VKM B-1955 / HRM2) (Desulfobacterium autotrophicum).